The following is an 852-amino-acid chain: Serine/threonine-protein kinase pakB (852 aa).

A disordered region spans residues 1–334 (MEQSKRVSMM…NVGNKQDEEK (334 aa)). Serine 8 is modified (phosphoserine; by autocatalysis). The span at 24-35 (SPPPNRKPPPPN) shows a compositional bias: pro residues. Low complexity predominate over residues 44–56 (SSLNSSGSSFVSP). Pro residues predominate over residues 57-74 (SPSPSPSPQQPVKRPLPS). Composition is skewed to low complexity over residues 90 to 117 (RPQQ…NSNG) and 124 to 163 (FSSS…GSSN). Positions 181 to 191 (TPPPPPQPTPS) are enriched in pro residues. Polar residues predominate over residues 201-210 (ASHNNTQHNI). 2 stretches are compositionally biased toward low complexity: residues 246–270 (SPGS…STPI) and 293–317 (SNSN…ATTS). Residues 356–369 (VGSPFNVKHNIHVN) enclose the CRIB domain. Residues 419-433 (AQQEQQALMQKQMQQ) are compositionally biased toward low complexity. Residues 419-526 (AQQEQQALMQ…GILSQQQEQQ (108 aa)) are disordered. Over residues 470–485 (PQHHHQQQPPQQHHHQ) the composition is skewed to basic residues. Low complexity predominate over residues 486–514 (QQQQQHNNNNNNNNNNNNNNNNQQSAQQQ). The 254-residue stretch at 570–823 (GEGSTKIGEG…AKVLLNHPFL (254 aa)) folds into the Protein kinase domain. ATP contacts are provided by residues 576 to 584 (IGEGAAGEV) and lysine 599. Catalysis depends on aspartate 691, which acts as the Proton acceptor.

This sequence belongs to the protein kinase superfamily. STE Ser/Thr protein kinase family. STE20 subfamily. Interacts with rac1A, rac1B, rac1C, racA, racB, racC and racF1. Requires Mg(2+) as cofactor. Post-translationally, autophosphorylated at Ser-8. This may stimulate interaction with GTP-bound Rac family members which then further stimulates autophosphorylation and kinase activity.

Its subcellular location is the membrane. It is found in the cytoplasm. It localises to the cytoskeleton. The enzyme catalyses L-seryl-[protein] + ATP = O-phospho-L-seryl-[protein] + ADP + H(+). The catalysed reaction is L-threonyl-[protein] + ATP = O-phospho-L-threonyl-[protein] + ADP + H(+). In terms of biological role, regulator of the myosin I component of the cytoskeleton: required for regulation of cytokinesis, phagocytosis and pinocytosis. The sequence is that of Serine/threonine-protein kinase pakB from Dictyostelium discoideum (Social amoeba).